Here is a 77-residue protein sequence, read N- to C-terminus: U8-lycotoxin-Ls1s (77 aa).

A signal peptide spans 1–20 (MKLIIFTGLVLFAIVSLIEA). The propeptide occupies 21–26 (QAENER).

This sequence belongs to the neurotoxin 19 (CSTX) family. 08 (U8-Lctx) subfamily. Post-translationally, contains 4 disulfide bonds. Expressed by the venom gland.

The protein resides in the secreted. The polypeptide is U8-lycotoxin-Ls1s (Lycosa singoriensis (Wolf spider)).